A 98-amino-acid polypeptide reads, in one-letter code: Mu-type opioid receptor (98 aa).

The Cytoplasmic portion of the chain corresponds to 1–9 (YTKMKTATN). Residues 10–34 (IYIFNLALADALATSTLPFQSVNYL) form a helical membrane-spanning segment. At 35–45 (MGTWPFGTILC) the chain is on the extracellular side. Residues 46–68 (KIVISIDYYNMFTSIFTLCTMSV) form a helical membrane-spanning segment. At 69 to 88 (DRYIAVCHPVKALDFRTPRN) the chain is on the cytoplasmic side. At Tyr-71 the chain carries Phosphotyrosine. Residues 89 to 98 (AKTVNVCNWI) form a helical membrane-spanning segment.

This sequence belongs to the G-protein coupled receptor 1 family. In terms of assembly, forms homooligomers and heterooligomers with other GPCRs, such as OPRD1, OPRK1, OPRL1, NPFFR2, ADRA2A, SSTR2, CNR1 and CCR5 (probably in dimeric forms). Interacts with heterotrimeric G proteins; interaction with a heterotrimeric complex containing GNAI1, GNB1 and GNG2 stabilizes the active conformation of the receptor and increases its affinity for endomorphin-2, the synthetic opioid peptide DAMGO and for morphinan agonists. Interacts with PPL; the interaction disrupts agonist-mediated G-protein activation. Interacts (via C-terminus) with DNAJB4 (via C-terminus). Interacts with calmodulin; the interaction inhibits the constitutive activity of OPRM1; it abolishes basal and attenuates agonist-stimulated G-protein coupling. Interacts with FLNA, PLD2, RANBP9 and WLS and GPM6A. Interacts with RTP4. Interacts with SYP and GNAS. Interacts with RGS9, RGS17, RGS20, RGS4, PPP1R9B and HINT1. In terms of processing, phosphorylated. Differentially phosphorylated in basal and agonist-induced conditions. Agonist-mediated phosphorylation modulates receptor internalization. Phosphorylated by GRK2 in a agonist-dependent manner. Phosphorylated on tyrosine residues; the phosphorylation is involved in agonist-induced G-protein-independent receptor down-regulation. Phosphorylated. Differentially phosphorylated in basal and agonist-induced conditions. Agonist-mediated phosphorylation modulates receptor internalization. Phosphorylated by GRK2 in a agonist-dependent manner. Phosphorylated on tyrosine residues; the phosphorylation is involved in agonist-induced G-protein-independent receptor down-regulation. Post-translationally, ubiquitinated. A basal ubiquitination seems not to be related to degradation. Ubiquitination is increased upon formation of OPRM1:OPRD1 oligomers leading to proteasomal degradation; the ubiquitination is diminished by RTP4.

It is found in the cell membrane. Its subcellular location is the cell projection. It localises to the axon. The protein resides in the perikaryon. The protein localises to the dendrite. It is found in the endosome. In terms of biological role, receptor for endogenous opioids such as beta-endorphin and endomorphin. Receptor for natural and synthetic opioids including morphine, heroin, DAMGO, fentanyl, etorphine, buprenorphin and methadone. Also activated by enkephalin peptides, such as Met-enkephalin or Met-enkephalin-Arg-Phe, with higher affinity for Met-enkephalin-Arg-Phe. Agonist binding to the receptor induces coupling to an inactive GDP-bound heterotrimeric G-protein complex and subsequent exchange of GDP for GTP in the G-protein alpha subunit leading to dissociation of the G-protein complex with the free GTP-bound G-protein alpha and the G-protein beta-gamma dimer activating downstream cellular effectors. The agonist- and cell type-specific activity is predominantly coupled to pertussis toxin-sensitive G(i) and G(o) G alpha proteins, GNAI1, GNAI2, GNAI3 and GNAO1, and to a lesser extent to pertussis toxin-insensitive G alpha proteins GNAZ and GNA15. They mediate an array of downstream cellular responses, including inhibition of adenylate cyclase activity and both N-type and L-type calcium channels, activation of inward rectifying potassium channels, mitogen-activated protein kinase (MAPK), phospholipase C (PLC), phosphoinositide/protein kinase (PKC), phosphoinositide 3-kinase (PI3K) and regulation of NF-kappa-B. Also couples to adenylate cyclase stimulatory G alpha proteins. The selective temporal coupling to G-proteins and subsequent signaling can be regulated by RGSZ proteins, such as RGS9, RGS17 and RGS4. Phosphorylation by members of the GPRK subfamily of Ser/Thr protein kinases and association with beta-arrestins is involved in short-term receptor desensitization. Beta-arrestins associate with the GPRK-phosphorylated receptor and uncouple it from the G-protein thus terminating signal transduction. The phosphorylated receptor is internalized through endocytosis via clathrin-coated pits which involves beta-arrestins. The activation of the ERK pathway occurs either in a G-protein-dependent or a beta-arrestin-dependent manner and is regulated by agonist-specific receptor phosphorylation. Acts as a class A G-protein coupled receptor (GPCR) which dissociates from beta-arrestin at or near the plasma membrane and undergoes rapid recycling. Receptor down-regulation pathways are varying with the agonist and occur dependent or independent of G-protein coupling. Endogenous ligands induce rapid desensitization, endocytosis and recycling. Heterooligomerization with other GPCRs can modulate agonist binding, signaling and trafficking properties. Involved in neurogenesis. The sequence is that of Mu-type opioid receptor (OPRM1) from Cavia porcellus (Guinea pig).